We begin with the raw amino-acid sequence, 731 residues long: Gelsolin (731 aa).

Residues 2-125 (VVEHPEFLKA…YKKGGVASGF (124 aa)) are actin-severing. The Gelsolin-like 1 repeat unit spans residues 25 to 107 (FDLVPVPPNL…VQGFESATFL (83 aa)). Tyr35 carries the post-translational modification Phosphotyrosine. 6 residues coordinate Ca(2+): Gly41, Asp42, Glu73, Asp85, Gly90, and Ala92. An actin-actin interfilament contact point region spans residues 72–75 (DESG). 111 to 118 (KSGLKYKK) provides a ligand contact to a 1,2-diacyl-sn-glycero-3-phospho-(1D-myo-inositol-4,5-bisphosphate). Val121 is a binding site for Ca(2+). 137 to 145 (RLFQVKGRR) is an a 1,2-diacyl-sn-glycero-3-phospho-(1D-myo-inositol-4,5-bisphosphate) binding site. Residues 147–219 (VRATEVPVSW…SEEGAEPEAM (73 aa)) form a Gelsolin-like 2 repeat. Residues Gly162 and Asp163 each contribute to the Ca(2+) site. Cys164 and Cys177 are disulfide-bonded. A Ca(2+)-binding site is contributed by Glu185. The span at 197–211 (RDNERSGRARVHVSE) shows a compositional bias: basic and acidic residues. The tract at residues 197–216 (RDNERSGRARVHVSEEGAEP) is disordered. Positions 235, 278, 279, and 303 each coordinate Ca(2+). The Gelsolin-like 3 repeat unit spans residues 266-338 (DENPFAQGAL…LPEGGETPLF (73 aa)). Residues Tyr358 and Tyr414 each carry the phosphotyrosine modification. The interval 383-731 (AAQHGMDDDG…LDRALAELAA (349 aa)) is actin-binding, Ca-sensitive. A Gelsolin-like 4 repeat occupies 404–485 (SDKVPVDPAT…VQGKEPAHLM (82 aa)). Residues Gly420, Asp421, Glu451, Asp463, Gly468, Pro470, and Thr500 each contribute to the Ca(2+) site. A Gelsolin-like 5 repeat occupies 527-591 (AVEVMPKAGA…AEGSEPDSFW (65 aa)). Lys533 is modified (N6-acetyllysine). Ca(2+) is bound by residues Asn540 and Asp541. The residue at position 552 (Tyr552) is a Phosphotyrosine. Glu563 lines the Ca(2+) pocket. Tyr600 carries the post-translational modification Phosphotyrosine. The Gelsolin-like 6 repeat unit spans residues 630 to 705 (IEEVPGELMQ…VKQGFEPPSF (76 aa)). Asp645, Asp646, and Glu668 together coordinate Ca(2+). A Phosphothreonine modification is found at Thr691.

Belongs to the villin/gelsolin family. Binds to actin and to fibronectin. Identified in a complex composed of ACTA1, COBL, GSN and TMSB4X. Interacts with the inactive form of EIF2AK2/PKR. Interacts with FLII.

It localises to the cytoplasm. The protein localises to the cytoskeleton. Functionally, calcium-regulated, actin-modulating protein that binds to the plus (or barbed) ends of actin monomers or filaments, preventing monomer exchange (end-blocking or capping). It can promote the assembly of monomers into filaments (nucleation) as well as sever filaments already formed. Plays a role in ciliogenesis. In Bos taurus (Bovine), this protein is Gelsolin (GSN).